The chain runs to 55 residues: MAKGIREKIKLVSSAGTGHYYTTTKNKRTKPEKLELKKFDPVVRQHVIYKEAKIK.

The protein belongs to the bacterial ribosomal protein bL33 family.

This Edwardsiella ictaluri (strain 93-146) protein is Large ribosomal subunit protein bL33.